Reading from the N-terminus, the 154-residue chain is Insulin-like peptide 1 (154 aa).

The N-terminal stretch at 1–29 (MFSQHNGAAVHGLRLQSLLIAAMLTAAMA) is a signal peptide. Intrachain disulfides connect C49-C138, C61-C151, and C137-C142. Positions 72 to 92 (RESLLGNSDDDEDTEQEVQDD) are disordered. The propeptide at 73–122 (ESLLGNSDDDEDTEQEVQDDSSMWQTLDGAGYSFSPLLTNLYGSEVLIKM) is connecting peptide. The span at 79–91 (SDDDEDTEQEVQD) shows a compositional bias: acidic residues.

The protein belongs to the insulin family. In terms of assembly, heterodimer of a B chain and an A chain linked by two disulfide bonds.

Its subcellular location is the secreted. In terms of biological role, possible ligand of InR/insulin-like receptor. In Drosophila melanogaster (Fruit fly), this protein is Insulin-like peptide 1.